We begin with the raw amino-acid sequence, 1590 residues long: Pentafunctional AROM polypeptide (1590 aa).

Residues 1–400 form a 3-dehydroquinate synthase region; that stretch reads MSTANGSSPT…HEPKASSVDD (400 aa). NAD(+) contacts are provided by residues 49–51, 96–99, 127–129, and D132; these read DTN, EGSK, and GGV. R143 contributes to the 7-phospho-2-dehydro-3-deoxy-D-arabino-heptonate binding site. 152 to 153 serves as a coordination point for NAD(+); that stretch reads TT. Positions 159 and 165 each coordinate 7-phospho-2-dehydro-3-deoxy-D-arabino-heptonate. Residue K174 participates in NAD(+) binding. Residue N175 coordinates 7-phospho-2-dehydro-3-deoxy-D-arabino-heptonate. NAD(+)-binding positions include 192–195 and N203; that span reads FLNT. E207 is a Zn(2+) binding site. 7-phospho-2-dehydro-3-deoxy-D-arabino-heptonate contacts are provided by residues 207–210 and K266; that span reads EVIK. Catalysis depends on E276, which acts as the Proton acceptor; for 3-dehydroquinate synthase activity. 7-phospho-2-dehydro-3-deoxy-D-arabino-heptonate contacts are provided by residues 280-284 and H287; that span reads RNLLN. H287 provides a ligand contact to Zn(2+). H291 (proton acceptor; for 3-dehydroquinate synthase activity) is an active-site residue. The 7-phospho-2-dehydro-3-deoxy-D-arabino-heptonate site is built by H303 and K372. Position 303 (H303) interacts with Zn(2+). The tract at residues 413-856 is EPSP synthase; the sequence is VQPGVRPGLK…WDVLSGVFGV (444 aa). Residue C838 is the For EPSP synthase activity of the active site. The segment at 876 to 1070 is shikimate kinase; it reads NRSVFVIGMR…KAKPHSFFVS (195 aa). Position 883–890 (883–890) interacts with ATP; that stretch reads GMRGAGKS. The tract at residues 1071 to 1285 is 3-dehydroquinase; the sequence is LTVPNITAHT…AAPGQLTAAE (215 aa). The Proton acceptor; for 3-dehydroquinate dehydratase activity role is filled by H1187. K1215 acts as the Schiff-base intermediate with substrate; for 3-dehydroquinate dehydratase activity in catalysis. Residues 1298 to 1590 are shikimate dehydrogenase; the sequence is KRKFYLFGKP…IVMNGTSDSS (293 aa).

This sequence in the N-terminal section; belongs to the sugar phosphate cyclases superfamily. Dehydroquinate synthase family. The protein in the 2nd section; belongs to the EPSP synthase family. In the 3rd section; belongs to the shikimate kinase family. It in the 4th section; belongs to the type-I 3-dehydroquinase family. This sequence in the C-terminal section; belongs to the shikimate dehydrogenase family. As to quaternary structure, homodimer. It depends on Zn(2+) as a cofactor.

The protein localises to the cytoplasm. It carries out the reaction 7-phospho-2-dehydro-3-deoxy-D-arabino-heptonate = 3-dehydroquinate + phosphate. The catalysed reaction is 3-dehydroquinate = 3-dehydroshikimate + H2O. It catalyses the reaction shikimate + NADP(+) = 3-dehydroshikimate + NADPH + H(+). The enzyme catalyses shikimate + ATP = 3-phosphoshikimate + ADP + H(+). It carries out the reaction 3-phosphoshikimate + phosphoenolpyruvate = 5-O-(1-carboxyvinyl)-3-phosphoshikimate + phosphate. The protein operates within metabolic intermediate biosynthesis; chorismate biosynthesis; chorismate from D-erythrose 4-phosphate and phosphoenolpyruvate: step 2/7. It functions in the pathway metabolic intermediate biosynthesis; chorismate biosynthesis; chorismate from D-erythrose 4-phosphate and phosphoenolpyruvate: step 3/7. It participates in metabolic intermediate biosynthesis; chorismate biosynthesis; chorismate from D-erythrose 4-phosphate and phosphoenolpyruvate: step 4/7. Its pathway is metabolic intermediate biosynthesis; chorismate biosynthesis; chorismate from D-erythrose 4-phosphate and phosphoenolpyruvate: step 5/7. The protein operates within metabolic intermediate biosynthesis; chorismate biosynthesis; chorismate from D-erythrose 4-phosphate and phosphoenolpyruvate: step 6/7. In terms of biological role, the AROM polypeptide catalyzes 5 consecutive enzymatic reactions in prechorismate polyaromatic amino acid biosynthesis. The sequence is that of Pentafunctional AROM polypeptide from Pyricularia oryzae (strain 70-15 / ATCC MYA-4617 / FGSC 8958) (Rice blast fungus).